The sequence spans 138 residues: Large ribosomal subunit protein bL12c (138 aa).

This sequence belongs to the bacterial ribosomal protein bL12 family. As to quaternary structure, homodimer. Part of the ribosomal stalk of the 50S ribosomal subunit. Forms a multimeric L10(L12)X complex, where L10 forms an elongated spine to which 2 to 4 L12 dimers bind in a sequential fashion. Binds GTP-bound translation factors.

The protein localises to the plastid. Functionally, forms part of the ribosomal stalk which helps the ribosome interact with GTP-bound translation factors. Is thus essential for accurate translation. The polypeptide is Large ribosomal subunit protein bL12c (Euglena longa (Euglenophycean alga)).